The chain runs to 876 residues: MAP7 domain-containing protein 3 (876 aa).

Disordered stretches follow at residues 30–139, 162–200, and 402–438; these read AEER…KFKA, GGVM…VDNT, and TEAP…IDKR. The span at 39 to 54 shows a compositional bias: polar residues; the sequence is INSSAGANKRSSSTPD. Positions 58–136 form a coiled coil; that stretch reads LKNDVKQQLA…KQKQAEDTEK (79 aa). Basic and acidic residues-rich tracts occupy residues 60 to 139 and 169 to 196; these read NDVK…KFKA and KSGK…DMQH. 2 positions are modified to phosphoserine: S417 and S483. Coiled-coil stretches lie at residues 549 to 578 and 626 to 658; these read IQIR…IARK and SAMM…RRKA. 2 disordered regions span residues 558-683 and 742-783; these read QSKN…EIFP and IQGK…NPNH. Composition is skewed to basic and acidic residues over residues 559-590 and 630-659; these read SKNE…DKVP and KSRD…RKAS. Residues 665 to 679 are compositionally biased toward acidic residues; the sequence is SEDEADDEGESEDSL. Over residues 750-763 the composition is skewed to basic residues; it reads SAKKPPTRPIRSRK. Polar residues predominate over residues 771–782; it reads IRPTQSASSNPN.

This sequence belongs to the MAP7 family. In terms of tissue distribution, high expression in lung, skeletal muscle, brain, and kidney, with much weaker expression in spleen, small intestine, liver, and heart.

The protein localises to the cytoplasm. Its subcellular location is the cytoskeleton. It localises to the spindle. In terms of biological role, promotes the assembly and stability of microtubules. The sequence is that of MAP7 domain-containing protein 3 (Map7d3) from Mus musculus (Mouse).